Here is a 136-residue protein sequence, read N- to C-terminus: Large ribosomal subunit protein uL22 (136 aa).

This sequence belongs to the universal ribosomal protein uL22 family. Part of the 50S ribosomal subunit.

Functionally, this protein binds specifically to 23S rRNA; its binding is stimulated by other ribosomal proteins, e.g. L4, L17, and L20. It is important during the early stages of 50S assembly. It makes multiple contacts with different domains of the 23S rRNA in the assembled 50S subunit and ribosome. Its function is as follows. The globular domain of the protein is located near the polypeptide exit tunnel on the outside of the subunit, while an extended beta-hairpin is found that lines the wall of the exit tunnel in the center of the 70S ribosome. The polypeptide is Large ribosomal subunit protein uL22 (Bacteroides fragilis (strain YCH46)).